Here is a 97-residue protein sequence, read N- to C-terminus: Putative membrane protein insertion efficiency factor (97 aa).

Positions 68 to 97 (VPGTELNTAPRSGQACNPTESTHSTTQTRH) are disordered. The span at 72–97 (ELNTAPRSGQACNPTESTHSTTQTRH) shows a compositional bias: polar residues.

The protein belongs to the UPF0161 family.

The protein localises to the cell inner membrane. Its function is as follows. Could be involved in insertion of integral membrane proteins into the membrane. This Marinobacter nauticus (strain ATCC 700491 / DSM 11845 / VT8) (Marinobacter aquaeolei) protein is Putative membrane protein insertion efficiency factor.